The chain runs to 456 residues: Bifunctional protein GlmU (456 aa).

The segment at 1-229 (MLNNAMSVVI…LSEVEGVNNR (229 aa)) is pyrophosphorylase. UDP-N-acetyl-alpha-D-glucosamine-binding positions include 11–14 (LAAG), Lys-25, Gln-76, 81–82 (GT), 103–105 (YGD), Gly-140, Glu-154, Asn-169, and Asn-227. Position 105 (Asp-105) interacts with Mg(2+). Asn-227 provides a ligand contact to Mg(2+). The segment at 230–250 (LQLSRLERVYQSEQAEKLLLA) is linker. Positions 251-456 (GVMLRDPARF…EGWRRPVKKK (206 aa)) are N-acetyltransferase. 2 residues coordinate UDP-N-acetyl-alpha-D-glucosamine: Arg-333 and Lys-351. His-363 serves as the catalytic Proton acceptor. UDP-N-acetyl-alpha-D-glucosamine-binding residues include Tyr-366 and Asn-377. Residues Ala-380, 386-387 (NY), Ser-405, Ala-423, and Arg-440 contribute to the acetyl-CoA site.

In the N-terminal section; belongs to the N-acetylglucosamine-1-phosphate uridyltransferase family. This sequence in the C-terminal section; belongs to the transferase hexapeptide repeat family. In terms of assembly, homotrimer. Mg(2+) is required as a cofactor.

The protein localises to the cytoplasm. The catalysed reaction is alpha-D-glucosamine 1-phosphate + acetyl-CoA = N-acetyl-alpha-D-glucosamine 1-phosphate + CoA + H(+). The enzyme catalyses N-acetyl-alpha-D-glucosamine 1-phosphate + UTP + H(+) = UDP-N-acetyl-alpha-D-glucosamine + diphosphate. The protein operates within nucleotide-sugar biosynthesis; UDP-N-acetyl-alpha-D-glucosamine biosynthesis; N-acetyl-alpha-D-glucosamine 1-phosphate from alpha-D-glucosamine 6-phosphate (route II): step 2/2. It functions in the pathway nucleotide-sugar biosynthesis; UDP-N-acetyl-alpha-D-glucosamine biosynthesis; UDP-N-acetyl-alpha-D-glucosamine from N-acetyl-alpha-D-glucosamine 1-phosphate: step 1/1. It participates in bacterial outer membrane biogenesis; LPS lipid A biosynthesis. Catalyzes the last two sequential reactions in the de novo biosynthetic pathway for UDP-N-acetylglucosamine (UDP-GlcNAc). The C-terminal domain catalyzes the transfer of acetyl group from acetyl coenzyme A to glucosamine-1-phosphate (GlcN-1-P) to produce N-acetylglucosamine-1-phosphate (GlcNAc-1-P), which is converted into UDP-GlcNAc by the transfer of uridine 5-monophosphate (from uridine 5-triphosphate), a reaction catalyzed by the N-terminal domain. This is Bifunctional protein GlmU from Escherichia coli O8 (strain IAI1).